The sequence spans 90 residues: UPF0298 protein BLi01717/BL02989 (90 aa).

It belongs to the UPF0298 family.

It is found in the cytoplasm. The protein is UPF0298 protein BLi01717/BL02989 of Bacillus licheniformis (strain ATCC 14580 / DSM 13 / JCM 2505 / CCUG 7422 / NBRC 12200 / NCIMB 9375 / NCTC 10341 / NRRL NRS-1264 / Gibson 46).